A 140-amino-acid polypeptide reads, in one-letter code: uncharacterized protein (140 aa).

N-linked (GlcNAc...) asparagine glycosylation is present at asparagine 36. A helical membrane pass occupies residues 91–107; sequence LFMSLIGLCVCYMNLVF. Residues 113–122 are compositionally biased toward polar residues; it reads QPSSSGSKGN. The disordered stretch occupies residues 113–140; that stretch reads QPSSSGSKGNTETTIETTTEVETETAKQ. Over residues 131-140 the composition is skewed to acidic residues; the sequence is TEVETETAKQ.

Its subcellular location is the endoplasmic reticulum membrane. This is an uncharacterized protein from Saccharomyces cerevisiae (strain ATCC 204508 / S288c) (Baker's yeast).